A 415-amino-acid chain; its full sequence is Arrestin red cell isoform 3 (415 aa).

The protein belongs to the arrestin family.

Its subcellular location is the cytoplasm. In Oncorhynchus mykiss (Rainbow trout), this protein is Arrestin red cell isoform 3.